The following is a 190-amino-acid chain: Inner membrane-spanning protein YciB (190 aa).

5 consecutive transmembrane segments (helical) span residues 22-42 (IYVATGALIVATAIQIVLTFA), 50-70 (MQLITFAMVAIFGGMTIFLHD), 76-96 (WKVTIVYAIFAIGLAVSHAMG), 118-138 (INWAWVAFFSFCAGLNVYVAF), and 148-168 (FKVFGLLIATFAYMIATGFYI).

Belongs to the YciB family.

It is found in the cell inner membrane. In terms of biological role, plays a role in cell envelope biogenesis, maintenance of cell envelope integrity and membrane homeostasis. This is Inner membrane-spanning protein YciB from Vibrio campbellii (strain ATCC BAA-1116).